A 251-amino-acid polypeptide reads, in one-letter code: Isoprenyl transferase (251 aa).

Asp-24 is an active-site residue. Asp-24 contributes to the Mg(2+) binding site. Residues 25 to 28 (GNGR), Trp-29, Arg-37, His-41, and 69 to 71 (STE) contribute to the substrate site. The Proton acceptor role is filled by Asn-72. Substrate contacts are provided by residues Trp-73, Arg-75, Arg-186, and 192 to 194 (RIS). Glu-205 provides a ligand contact to Mg(2+).

It belongs to the UPP synthase family. Homodimer. It depends on Mg(2+) as a cofactor.

Its function is as follows. Catalyzes the condensation of isopentenyl diphosphate (IPP) with allylic pyrophosphates generating different type of terpenoids. The chain is Isoprenyl transferase from Chromobacterium violaceum (strain ATCC 12472 / DSM 30191 / JCM 1249 / CCUG 213 / NBRC 12614 / NCIMB 9131 / NCTC 9757 / MK).